Here is a 103-residue protein sequence, read N- to C-terminus: MQKIKSNDEIIIIAGKDKGSIGIVTKIVDSKVLVEGLNLAKKHVKPNPNKGVTGGITEIEMPLSISNVAIYNPTTKKADRVGIRTSKNGIKERFFKSNDKSII.

The protein belongs to the universal ribosomal protein uL24 family. In terms of assembly, part of the 50S ribosomal subunit.

Functionally, one of two assembly initiator proteins, it binds directly to the 5'-end of the 23S rRNA, where it nucleates assembly of the 50S subunit. In terms of biological role, one of the proteins that surrounds the polypeptide exit tunnel on the outside of the subunit. The sequence is that of Large ribosomal subunit protein uL24 from Vesicomyosocius okutanii subsp. Calyptogena okutanii (strain HA).